Reading from the N-terminus, the 733-residue chain is MERRSESPCLRDSPDRRSGSPDVKGPPPVKVARLEQNGSPMGARGRPNGAVAKAVGGLMIPVFCVVEQLDGSLEYDNREEHAEFVLVRKDVLFSQLVETALLALGYSHSSAAQAQGIIKLGRWNPLPLSYVTDAPDATVADMLQDVYHVVTLKIQLQSCSKLEDLPAEQWNHATVRNALKELLKEMNQSTLAKECPLSQSMISSIVNSTYYANVSATKCQEFGRWYKKYKKIKVERVERENLSDYCVLGQRPMHLPNMNQLASLGKTNEQSPHSQIHHSTPIRNQVPALQPIMSPGLLSPQLSPQLVRQQIAMAHLINQQIAVSRLLAHQHPQAINQQFLNHPPIPRAVKPEPTNSSVEVSPDIYQQVRDELKRASVSQAVFARVAFNRTQGLLSEILRKEEDPRTASQSLLVNLRAMQNFLNLPEVERDRIYQDERERSMNPNVSMVSSASSSPSSSRTPQAKTSTPTTDLPIKVDGANINITAAIYDEIQQEMKRAKVSQALFAKVAANKSQGWLCELLRWKENPSPENRTLWENLCTIRRFLNLPQHERDVIYEEESRHHHSERMQHVVQLPPEPVQVLHRQQSQPAKESSPPREEAPPPPPPTEDSCAKKPRSRTKISLEALGILQSFIHDVGLYPDQEAIHTLSAQLDLPKHTIIKFFQNQRYHVKHHGKLKEHLGSAVDVAEYKDEELLTESEENDSEEGSEEMYKVEAEEENADKSKAAPAEIDQR.

Positions 1–47 (MERRSESPCLRDSPDRRSGSPDVKGPPPVKVARLEQNGSPMGARGRP) are disordered. Ser20 carries the phosphoserine modification. Glycyl lysine isopeptide (Lys-Gly) (interchain with G-Cter in SUMO2) cross-links involve residues Lys24 and Lys30. Residue Ser39 is modified to Phosphoserine. Positions 57–158 (GLMIPVFCVV…VVTLKIQLQS (102 aa)) constitute a CMP domain. Lys161 is covalently cross-linked (Glycyl lysine isopeptide (Lys-Gly) (interchain with G-Cter in SUMO2)). The region spanning 161–234 (KLEDLPAEQW…WYKKYKKIKV (74 aa)) is the CUTL domain. Lys233 participates in a covalent cross-link: Glycyl lysine isopeptide (Lys-Gly) (interchain with G-Cter in SUMO). Residue Lys350 forms a Glycyl lysine isopeptide (Lys-Gly) (interchain with G-Cter in SUMO); alternate linkage. Lys350 participates in a covalent cross-link: Glycyl lysine isopeptide (Lys-Gly) (interchain with G-Cter in SUMO2); alternate. Positions 350 to 437 (KPEPTNSSVE…ERDRIYQDER (88 aa)) form a DNA-binding region, CUT 1. The interval 435–473 (DERERSMNPNVSMVSSASSSPSSSRTPQAKTSTPTTDLP) is disordered. The span at 441-458 (MNPNVSMVSSASSSPSSS) shows a compositional bias: low complexity. Position 454 is a phosphoserine (Ser454). Positions 459–470 (RTPQAKTSTPTT) are enriched in polar residues. Thr467 bears the Phosphothreonine mark. The segment at residues 473–560 (PIKVDGANIN…ERDVIYEEES (88 aa)) is a DNA-binding region (CUT 2). Lys475 participates in a covalent cross-link: Glycyl lysine isopeptide (Lys-Gly) (interchain with G-Cter in SUMO2). Residues 580–593 (QVLHRQQSQPAKES) show a composition bias toward low complexity. 2 disordered regions span residues 580 to 617 (QVLH…KPRS) and 694 to 733 (LLTE…IDQR). Ser594 carries the post-translational modification Phosphoserine. The segment at residues 615-674 (PRSRTKISLEALGILQSFIHDVGLYPDQEAIHTLSAQLDLPKHTIIKFFQNQRYHVKHHG) is a DNA-binding region (homeobox). The segment covering 694 to 708 (LLTESEENDSEEGSE) has biased composition (acidic residues). Basic and acidic residues predominate over residues 709–733 (EMYKVEAEEENADKSKAAPAEIDQR). Lys724 participates in a covalent cross-link: Glycyl lysine isopeptide (Lys-Gly) (interchain with G-Cter in SUMO2).

Belongs to the CUT homeobox family. As to quaternary structure, interacts with ATF4 and RUNX2; resulting in enhanced DNA binding and transactivation by these transcription factors. Interacts with PIAS1. Sumoylated by PIAS1. Sumoylation promotes nuclear localization, but represses transcription factor activity. High expression in adult brain, moderate expression in fetal brain, and weak expression in adult liver, kidney, and spinal cord and in select brain regions, including amygdala, corpus callosum, caudate nucleus, and hippocampus.

It is found in the nucleus matrix. Its function is as follows. Binds to DNA, at nuclear matrix- or scaffold-associated regions. Thought to recognize the sugar-phosphate structure of double-stranded DNA. Transcription factor controlling nuclear gene expression, by binding to matrix attachment regions (MARs) of DNA and inducing a local chromatin-loop remodeling. Acts as a docking site for several chromatin remodeling enzymes and also by recruiting corepressors (HDACs) or coactivators (HATs) directly to promoters and enhancers. Required for the initiation of the upper-layer neurons (UL1) specific genetic program and for the inactivation of deep-layer neurons (DL) and UL2 specific genes, probably by modulating BCL11B expression. Repressor of Ctip2 and regulatory determinant of corticocortical connections in the developing cerebral cortex. May play an important role in palate formation. Acts as a molecular node in a transcriptional network regulating skeletal development and osteoblast differentiation. This is DNA-binding protein SATB2 (SATB2) from Homo sapiens (Human).